Consider the following 59-residue polypeptide: U-limacoditoxin(3)-Dv33 (59 aa).

Positions 1 to 19 (MSKVILLCLIFALFACSIS) are cleaved as a signal peptide.

The protein belongs to the limacoditoxin-3 family. In terms of processing, the natural peptide is not amidated. The recombinant peptide is amidated. As to expression, expressed by the venom secretory cell of the spine. The spine is a cuticular structure containing a single large nucleated venom-secreting cell at its base. It is an independent unit capable of producing, storing and injecting venom. On the back of D.vulnerans caterpillars, spines are grouped together by 50 to 100 to form scoli, of which there are eight in D.vulnerans.

Its subcellular location is the secreted. Its function is as follows. Probable toxin. Shows a relatively potent antiparasitic activity against the major pathogenic nematode of ruminants (H.contortus, EC(50)=2.6 uM). Does not show insecticidal and antimicrobial activities. Does not induce increase in intracellular calcium in mouse DRG neurons, suggesting that it does not induce pain. The protein is U-limacoditoxin(3)-Dv33 of Doratifera vulnerans (Mottled cup moth).